The following is a 323-amino-acid chain: Aldo-keto reductase family 1 member C18 (323 aa).

NADP(+) is bound by residues 20–24 (GFGTY) and Asp50. Catalysis depends on Tyr55, which acts as the Proton donor. His117 is a substrate binding site. NADP(+) is bound by residues 166–167 (SN), Gln190, 216–221 (YGALGT), and 270–280 (KSFNEERIREN).

It belongs to the aldo/keto reductase family. In terms of assembly, monomer. In terms of processing, the N-terminus is blocked. Corpus luteum (large luteal cells).

The protein resides in the cytoplasm. The enzyme catalyses (17R,20S)-17,20-dihydroxypregn-4-en-3-one + NADP(+) = 17alpha-hydroxyprogesterone + NADPH + H(+). The catalysed reaction is (17R,20S)-17,20-dihydroxypregn-4-en-3-one + NAD(+) = 17alpha-hydroxyprogesterone + NADH + H(+). In terms of biological role, catalyzes the conversion of progesterone into 20-alpha-dihydroprogesterone (20 alpha-OHP). In Rattus norvegicus (Rat), this protein is Aldo-keto reductase family 1 member C18 (Akr1c18).